The chain runs to 503 residues: ATP synthase subunit alpha (503 aa).

169–176 (GDRKTGKT) lines the ATP pocket.

It belongs to the ATPase alpha/beta chains family. As to quaternary structure, F-type ATPases have 2 components, CF(1) - the catalytic core - and CF(0) - the membrane proton channel. CF(1) has five subunits: alpha(3), beta(3), gamma(1), delta(1), epsilon(1). CF(0) has three main subunits: a(1), b(2) and c(9-12). The alpha and beta chains form an alternating ring which encloses part of the gamma chain. CF(1) is attached to CF(0) by a central stalk formed by the gamma and epsilon chains, while a peripheral stalk is formed by the delta and b chains.

It localises to the cell membrane. The catalysed reaction is ATP + H2O + 4 H(+)(in) = ADP + phosphate + 5 H(+)(out). Increases 2-fold following exposure to low pH. Functionally, produces ATP from ADP in the presence of a proton gradient across the membrane. The alpha chain is a regulatory subunit. This chain is ATP synthase subunit alpha, found in Lactobacillus acidophilus (strain ATCC 700396 / NCK56 / N2 / NCFM).